Consider the following 448-residue polypeptide: Probable glycine dehydrogenase (decarboxylating) subunit 1 (448 aa).

This sequence belongs to the GcvP family. N-terminal subunit subfamily. In terms of assembly, the glycine cleavage system is composed of four proteins: P, T, L and H. In this organism, the P 'protein' is a heterodimer of two subunits.

It carries out the reaction N(6)-[(R)-lipoyl]-L-lysyl-[glycine-cleavage complex H protein] + glycine + H(+) = N(6)-[(R)-S(8)-aminomethyldihydrolipoyl]-L-lysyl-[glycine-cleavage complex H protein] + CO2. Functionally, the glycine cleavage system catalyzes the degradation of glycine. The P protein binds the alpha-amino group of glycine through its pyridoxal phosphate cofactor; CO(2) is released and the remaining methylamine moiety is then transferred to the lipoamide cofactor of the H protein. This chain is Probable glycine dehydrogenase (decarboxylating) subunit 1, found in Listeria monocytogenes serotype 4b (strain CLIP80459).